Consider the following 1375-residue polypeptide: Mediator of RNA polymerase II transcription subunit 13 (1375 aa).

Residues 1–51 are disordered; sequence MKASEMARPPMRPGNPHAFASPATTPSRTASPNNAQGANVRTTQGGNQAGA. Residues 22–51 show a composition bias toward polar residues; sequence PATTPSRTASPNNAQGANVRTTQGGNQAGA. 2 coiled-coil regions span residues 182–216 and 297–324; these read ADDS…WLSR and QLER…KDEA. Basic and acidic residues predominate over residues 313–324; sequence AEEDAMRRKDEA. Disordered stretches follow at residues 313–333, 350–370, 397–417, 537–581, 660–689, 841–862, and 1233–1285; these read AEED…SSPF, YPTP…DTPS, YTTT…APLE, ATSP…PASL, RAVS…VDTH, QAKG…IPSN, and TPTT…AADP. A compositionally biased stretch (polar residues) spans 397–411; sequence YTTTDNQQHASTSPT. Positions 666–685 are enriched in acidic residues; that stretch reads SASDSESETSDMSEGSPEDP. Positions 1233–1259 are enriched in polar residues; the sequence is TPTTPAPSNSSAQANTNTPGSTPQTGV.

It belongs to the Mediator complex subunit 13 family. Component of the SRB8-11 complex, which itself associates with the Mediator complex.

The protein localises to the nucleus. Component of the SRB8-11 complex. The SRB8-11 complex is a regulatory module of the Mediator complex which is itself involved in regulation of basal and activated RNA polymerase II-dependent transcription. The SRB8-11 complex may be involved in the transcriptional repression of a subset of genes regulated by Mediator. It may inhibit the association of the Mediator complex with RNA polymerase II to form the holoenzyme complex. This is Mediator of RNA polymerase II transcription subunit 13 (SSN2) from Phaeosphaeria nodorum (strain SN15 / ATCC MYA-4574 / FGSC 10173) (Glume blotch fungus).